A 114-amino-acid chain; its full sequence is Cholecystokinin (114 aa).

The N-terminal stretch at 1 to 20 (MNGGLCLCVLMAVLAAGTLA) is a signal peptide. Residue Tyr96 is modified to Sulfotyrosine. Phe102 carries the phenylalanine amide modification. Residues 106–114 (SAEEYEYTS) constitute a propeptide that is removed on maturation. Sulfotyrosine is present on residues Tyr110 and Tyr112.

Belongs to the gastrin/cholecystokinin family. Binds to CCK-A receptors in the pancreas and CCK-B receptors in the brain. In terms of processing, the precursor is cleaved by proteases to produce a number of active cholecystokinins. Brain contains CCK-octapeptide (CCK8) and several CCK-desoctapeptides; whereas pig gut contains intact CCK33, CCK39, and CCK58 as well as CCK-octapeptide and the CCK-desoctapeptides. Distribution differences are due to tissue-specific post-translational processing events. Post-translationally, the precursor is cleaved by ACE, which removes the Gly-Arg-Arg peptide at the C-terminus, leading to mature hormone. As to expression, synthesized in both cerebral cortex and duodenal mucosa.

It is found in the secreted. This peptide hormone induces gall bladder contraction and the release of pancreatic enzymes in the gut. Its function in the brain is not clear. Binding to CCK-A receptors stimulates amylase release from the pancreas, binding to CCK-B receptors stimulates gastric acid secretion. In Sus scrofa (Pig), this protein is Cholecystokinin (CCK).